The following is a 52-amino-acid chain: Alpha-crystallin B chain (52 aa).

The protein belongs to the small heat shock protein (HSP20) family. Homodimer. Aggregates with homologous proteins, including alpha-A-crystallin and the small heat shock protein HSPB1, to form large heteromeric complexes.

Functionally, may contribute to the transparency and refractive index of the lens. This Trachemys scripta elegans (Red-eared slider turtle) protein is Alpha-crystallin B chain (CRYAB).